We begin with the raw amino-acid sequence, 541 residues long: Chaperonin GroEL (541 aa).

ATP contacts are provided by residues 29–32 (TLGP), 86–90 (DGTTT), Gly-413, 476–478 (NAA), and Asp-492. The segment at 521-541 (KPEDNPAPAAPAANPGMGGMM) is disordered. The segment covering 526 to 535 (PAPAAPAANP) has biased composition (low complexity).

It belongs to the chaperonin (HSP60) family. As to quaternary structure, forms a cylinder of 14 subunits composed of two heptameric rings stacked back-to-back. Interacts with the co-chaperonin GroES.

It localises to the cytoplasm. The catalysed reaction is ATP + H2O + a folded polypeptide = ADP + phosphate + an unfolded polypeptide.. Its function is as follows. Together with its co-chaperonin GroES, plays an essential role in assisting protein folding. The GroEL-GroES system forms a nano-cage that allows encapsulation of the non-native substrate proteins and provides a physical environment optimized to promote and accelerate protein folding. This Levilactobacillus brevis (strain ATCC 367 / BCRC 12310 / CIP 105137 / JCM 1170 / LMG 11437 / NCIMB 947 / NCTC 947) (Lactobacillus brevis) protein is Chaperonin GroEL.